We begin with the raw amino-acid sequence, 355 residues long: Protein RecA (355 aa).

ATP is bound at residue 72 to 79; that stretch reads GPESSGKT.

The protein belongs to the RecA family.

It is found in the cytoplasm. Can catalyze the hydrolysis of ATP in the presence of single-stranded DNA, the ATP-dependent uptake of single-stranded DNA by duplex DNA, and the ATP-dependent hybridization of homologous single-stranded DNAs. It interacts with LexA causing its activation and leading to its autocatalytic cleavage. This chain is Protein RecA, found in Thermosynechococcus vestitus (strain NIES-2133 / IAM M-273 / BP-1).